A 393-amino-acid chain; its full sequence is Phosphoglycerate kinase (393 aa).

Residues 21 to 23, Arg-36, 59 to 62, Arg-113, and Arg-146 contribute to the substrate site; these read DLN and HLGR. ATP contacts are provided by residues Lys-197, Glu-319, and 345–348; that span reads GGDT.

This sequence belongs to the phosphoglycerate kinase family. As to quaternary structure, monomer.

The protein resides in the cytoplasm. It catalyses the reaction (2R)-3-phosphoglycerate + ATP = (2R)-3-phospho-glyceroyl phosphate + ADP. It participates in carbohydrate degradation; glycolysis; pyruvate from D-glyceraldehyde 3-phosphate: step 2/5. This is Phosphoglycerate kinase from Nitratidesulfovibrio vulgaris (strain DSM 19637 / Miyazaki F) (Desulfovibrio vulgaris).